The chain runs to 1595 residues: DNA-directed RNA polymerase subunit beta'' (1595 aa).

Residues Cys-216, Cys-286, Cys-294, and Cys-297 each coordinate Zn(2+).

The protein belongs to the RNA polymerase beta' chain family. RpoC2 subfamily. In terms of assembly, in plastids the minimal PEP RNA polymerase catalytic core is composed of four subunits: alpha, beta, beta', and beta''. When a (nuclear-encoded) sigma factor is associated with the core the holoenzyme is formed, which can initiate transcription. It depends on Zn(2+) as a cofactor.

It is found in the plastid. Its subcellular location is the chloroplast. It catalyses the reaction RNA(n) + a ribonucleoside 5'-triphosphate = RNA(n+1) + diphosphate. Functionally, DNA-dependent RNA polymerase catalyzes the transcription of DNA into RNA using the four ribonucleoside triphosphates as substrates. The sequence is that of DNA-directed RNA polymerase subunit beta'' from Bigelowiella natans (Pedinomonas minutissima).